The following is a 312-amino-acid chain: uncharacterized protein (312 aa).

Helical transmembrane passes span 11–31 (IAAI…KIAL), 46–66 (IAFA…SIRV), 72–92 (ILPL…FGLV), 98–118 (EAGI…AYVL), 128–148 (GFTV…GVDV), 155–171 (GSLL…MYNT), 183–203 (TELT…IALV), 221–241 (PGFV…TSFL), 254–274 (MSAF…VILN), and 277–297 (LAWY…GSNI). 2 consecutive EamA domains span residues 18-142 (FIIG…FIFV) and 164-297 (LSSA…GSNI).

It belongs to the EamA transporter family.

Its subcellular location is the cell membrane. This is an uncharacterized protein from Bacillus subtilis (strain 168).